The following is a 158-amino-acid chain: ATP synthase subunit delta (158 aa).

This sequence belongs to the ATPase delta chain family. In terms of assembly, F-type ATPases have 2 components, F(1) - the catalytic core - and F(0) - the membrane proton channel. F(1) has five subunits: alpha(3), beta(3), gamma(1), delta(1), epsilon(1). F(0) has three main subunits: a(1), b(2) and c(10-14). The alpha and beta chains form an alternating ring which encloses part of the gamma chain. F(1) is attached to F(0) by a central stalk formed by the gamma and epsilon chains, while a peripheral stalk is formed by the delta and b chains.

It localises to the cell membrane. Functionally, f(1)F(0) ATP synthase produces ATP from ADP in the presence of a proton or sodium gradient. F-type ATPases consist of two structural domains, F(1) containing the extramembraneous catalytic core and F(0) containing the membrane proton channel, linked together by a central stalk and a peripheral stalk. During catalysis, ATP synthesis in the catalytic domain of F(1) is coupled via a rotary mechanism of the central stalk subunits to proton translocation. In terms of biological role, this protein is part of the stalk that links CF(0) to CF(1). It either transmits conformational changes from CF(0) to CF(1) or is implicated in proton conduction. The protein is ATP synthase subunit delta of Roseiflexus castenholzii (strain DSM 13941 / HLO8).